The sequence spans 610 residues: Putative sensor histidine kinase NtrY-like (610 aa).

Transmembrane regions (helical) follow at residues 18–38 (IGIL…TISI), 49–69 (KVIW…ILLT), 92–112 (IVVA…ISSA), and 292–312 (IIFI…GVIV). In terms of domain architecture, HAMP spans 314–368 (AKIVNPIKKLVIATDKVKSGDLTVQVPENEVDKDEIGTLYAAFNRMIKQLSRQQR). Residues 385–596 (KVAHEIKNPL…VIDIRFNLEE (212 aa)) enclose the Histidine kinase domain. H388 carries the post-translational modification Phosphohistidine; by autocatalysis.

The protein resides in the cell membrane. The enzyme catalyses ATP + protein L-histidine = ADP + protein N-phospho-L-histidine.. Its function is as follows. Member of the two-component regulatory system RBE_0470/RBE_0312. This is Putative sensor histidine kinase NtrY-like from Rickettsia bellii (strain RML369-C).